A 439-amino-acid polypeptide reads, in one-letter code: Divalent metal cation transporter MntH 1 (439 aa).

Transmembrane regions (helical) follow at residues Phe-64–Ser-84, Leu-139–Leu-161, Ala-171–Ile-191, Pro-214–His-234, Ile-262–Ala-282, Leu-300–Ala-320, Leu-359–Val-379, Leu-380–Ser-400, and Leu-418–Phe-438.

The protein belongs to the NRAMP family.

It localises to the cell inner membrane. Functionally, h(+)-stimulated, divalent metal cation uptake system. This is Divalent metal cation transporter MntH 1 from Pseudomonas aeruginosa (strain ATCC 15692 / DSM 22644 / CIP 104116 / JCM 14847 / LMG 12228 / 1C / PRS 101 / PAO1).